Here is a 437-residue protein sequence, read N- to C-terminus: Phosphomethylpyrimidine synthase (437 aa).

Residues Asn69, Met98, Tyr127, His163, 185–187, 226–229, and Glu265 contribute to the substrate site; these read SRG and DACR. His269 contacts Zn(2+). Tyr292 contributes to the substrate binding site. A Zn(2+)-binding site is contributed by His333. 3 residues coordinate [4Fe-4S] cluster: Cys409, Cys412, and Cys416.

It belongs to the ThiC family. Requires [4Fe-4S] cluster as cofactor.

It catalyses the reaction 5-amino-1-(5-phospho-beta-D-ribosyl)imidazole + S-adenosyl-L-methionine = 4-amino-2-methyl-5-(phosphooxymethyl)pyrimidine + CO + 5'-deoxyadenosine + formate + L-methionine + 3 H(+). Its pathway is cofactor biosynthesis; thiamine diphosphate biosynthesis. Its function is as follows. Catalyzes the synthesis of the hydroxymethylpyrimidine phosphate (HMP-P) moiety of thiamine from aminoimidazole ribotide (AIR) in a radical S-adenosyl-L-methionine (SAM)-dependent reaction. This is Phosphomethylpyrimidine synthase from Alkaliphilus metalliredigens (strain QYMF).